The following is a 122-amino-acid chain: Large ribosomal subunit protein uL18 (122 aa).

Basic residues predominate over residues 1–19; that stretch reads MSKLSRKQQTQKRHKRLRR. The segment at 1–27 is disordered; it reads MSKLSRKQQTQKRHKRLRRNLSGTESR.

It belongs to the universal ribosomal protein uL18 family. In terms of assembly, part of the 50S ribosomal subunit; part of the 5S rRNA/L5/L18/L25 subcomplex. Contacts the 5S and 23S rRNAs.

This is one of the proteins that bind and probably mediate the attachment of the 5S RNA into the large ribosomal subunit, where it forms part of the central protuberance. The chain is Large ribosomal subunit protein uL18 from Prochlorococcus marinus (strain NATL1A).